The primary structure comprises 293 residues: 4-hydroxybenzoate octaprenyltransferase (293 aa).

The next 8 helical transmembrane spans lie at 26 to 46 (IGTL…AKGM), 49 to 69 (IKVL…GCII), 102 to 122 (LFAL…PLVV), 148 to 168 (FLGI…LGEV), 173 to 193 (WWLF…YAMI), 217 to 237 (WIAV…LSAE), 240 to 260 (FIYA…QRLI), and 272 to 292 (FLNN…DYLL).

Belongs to the UbiA prenyltransferase family. The cofactor is Mg(2+).

Its subcellular location is the cell inner membrane. It catalyses the reaction all-trans-octaprenyl diphosphate + 4-hydroxybenzoate = 4-hydroxy-3-(all-trans-octaprenyl)benzoate + diphosphate. It participates in cofactor biosynthesis; ubiquinone biosynthesis. Functionally, catalyzes the prenylation of para-hydroxybenzoate (PHB) with an all-trans polyprenyl group. Mediates the second step in the final reaction sequence of ubiquinone-8 (UQ-8) biosynthesis, which is the condensation of the polyisoprenoid side chain with PHB, generating the first membrane-bound Q intermediate 3-octaprenyl-4-hydroxybenzoate. The chain is 4-hydroxybenzoate octaprenyltransferase from Shewanella denitrificans (strain OS217 / ATCC BAA-1090 / DSM 15013).